The sequence spans 547 residues: Phosphatidylinositol/phosphatidylcholine transfer protein SFH7 (547 aa).

The CRAL-TRIO domain occupies Glu-130 to Asp-304. The stretch at Ser-464–Asn-526 forms a coiled coil.

This sequence belongs to the SFH family.

It is found in the golgi apparatus membrane. Its subcellular location is the cell membrane. Its function is as follows. Required for transport of secretory proteins from the Golgi complex. Catalyzes the transfer of phosphatidylinositol and phosphatidylcholine between membranes in vitro. The chain is Phosphatidylinositol/phosphatidylcholine transfer protein SFH7 (SFH7) from Arabidopsis thaliana (Mouse-ear cress).